The primary structure comprises 158 residues: uncharacterized protein (158 aa).

This is an uncharacterized protein from Methanocaldococcus jannaschii (strain ATCC 43067 / DSM 2661 / JAL-1 / JCM 10045 / NBRC 100440) (Methanococcus jannaschii).